Consider the following 320-residue polypeptide: NAD kinase (320 aa).

Aspartate 96 serves as the catalytic Proton acceptor. NAD(+)-binding positions include 96–97 (DG), arginine 101, 170–171 (NE), aspartate 200, and 211–216 (TAYAFS).

The protein belongs to the NAD kinase family. Requires a divalent metal cation as cofactor.

The protein resides in the cytoplasm. The catalysed reaction is NAD(+) + ATP = ADP + NADP(+) + H(+). Involved in the regulation of the intracellular balance of NAD and NADP, and is a key enzyme in the biosynthesis of NADP. Catalyzes specifically the phosphorylation on 2'-hydroxyl of the adenosine moiety of NAD to yield NADP. The polypeptide is NAD kinase (Rhodococcus jostii (strain RHA1)).